A 612-amino-acid polypeptide reads, in one-letter code: DNA damage checkpoint protein 1 (612 aa).

A Phosphoserine modification is found at Ser-436. Residues 576–612 form a disordered region; that stretch reads GLLNSQNDTSNHKKQDNKEMEDGLGLTQVEKPRGIFD. The segment covering 585–596 has biased composition (basic and acidic residues); sequence SNHKKQDNKEME.

Belongs to the DDC1 family. As to quaternary structure, component of the checkpoint clamp complex composed of DDC1, MEC3 and RAD17. The interaction with MEC3 is performed in a RAD17-dependent manner. The checkpoint clamp complex loads onto DNA in an ATP-dependent manner through its interaction with the RFC-RAD4 checkpoint clamp loader complex. Interacts with the DNA polymerase zeta subunit REV7 and DPB11. In terms of processing, phosphorylated during cell cycle S-phase and in response to DNA damage. This phosphorylation is MEC14 dependent. Also hosphorylated by CDC28.

The protein resides in the cytoplasm. It localises to the nucleus. Component of the checkpoint clamp complex involved in the surveillance mechanism that allows the DNA repair pathways to act to restore the integrity of the DNA prior to DNA synthesis or separation of the replicated chromosomes. Associates with sites of DNA damage and modulates the MEC1 signaling pathway and the activation of RAD53 in response to DNA damage at phase G1. The complex also physically regulates DNA polymerase zeta-dependent mutagenesis by controlling the access of polymerase zeta to damaged DNA. This Saccharomyces cerevisiae (strain ATCC 204508 / S288c) (Baker's yeast) protein is DNA damage checkpoint protein 1 (DDC1).